The sequence spans 331 residues: Pseudouridylate synthase TRUB2, mitochondrial (331 aa).

Residue D98 is the Nucleophile of the active site. Residues 309-331 (STGQPWGLKDPSSTLELESCSGQ) are disordered. Residues 319 to 331 (PSSTLELESCSGQ) show a composition bias toward polar residues.

Belongs to the pseudouridine synthase TruB family. Forms a regulatory protein-RNA complex, consisting of RCC1L, NGRN, RPUSD3, RPUSD4, TRUB2, FASTKD2 and 16S mt-rRNA.

It is found in the mitochondrion matrix. It carries out the reaction a uridine in mRNA = a pseudouridine in mRNA. The enzyme catalyses uridine(55) in tRNA = pseudouridine(55) in tRNA. Minor enzyme contributing to the isomerization of uridine to pseudouridine (pseudouridylation) of specific mitochondrial mRNAs (mt-mRNAs) such as COXI and COXIII mt-mRNAs. As a component of a functional protein-RNA module, consisting of RCC1L, NGRN, RPUSD3, RPUSD4, TRUB2, FASTKD2 and 16S mitochondrial ribosomal RNA (16S mt-rRNA), controls 16S mt-rRNA abundance and is required for intra-mitochondrial translation. Also catalyzes pseudouridylation of some tRNAs, including synthesis of pseudouridine(55) from uracil-55, in the psi GC loop of a subset of tRNAs. This chain is Pseudouridylate synthase TRUB2, mitochondrial, found in Mus musculus (Mouse).